The primary structure comprises 371 residues: Solute carrier family 35 member F6 (371 aa).

Residues 1-25 (MAWTKHQLFLAGLMLVTGSINTLSA) form the signal peptide. The next 2 membrane-spanning stretches (helical) occupy residues 48 to 68 (FLQA…FYLL) and 89 to 109 (LLFL…YVAL). One can recognise an EamA domain in the interval 104-160 (LMYVALNMTSASSFQMLRGAVIIFTGLFSVAFLGRRLVLSQWLGILATIAGLVVVGL). N-linked (GlcNAc...) asparagine glycosylation occurs at Asn-110. 7 helical membrane-spanning segments follow: residues 117 to 137 (FQML…AFLG), 140 to 160 (LVLS…VVGL), 176 to 196 (VITG…QMVL), 216 to 236 (GLFG…IPAG), 261 to 281 (LIAV…FAGI), 295 to 312 (LDSL…ALGW), and 317 to 336 (ALQI…YNGL). The tract at residues 347–371 (GRPPAEESEQERLLGGSRTPINDAS) is disordered. Thr-365 carries the post-translational modification Phosphothreonine.

It belongs to the SLC35F solute transporter family. Interacts with SLC25A5.

It localises to the mitochondrion. It is found in the lysosome membrane. In terms of biological role, involved in the maintenance of mitochondrial membrane potential in pancreatic ductal adenocarcinoma (PDAC) cells. Promotes pancreatic ductal adenocarcinoma (PDAC) cell growth. May play a role as a nucleotide-sugar transporter. The sequence is that of Solute carrier family 35 member F6 (SLC35F6) from Pongo abelii (Sumatran orangutan).